Here is a 227-residue protein sequence, read N- to C-terminus: Chloronitrobenzene nitroreductase (227 aa).

14-18 contacts FMN; the sequence is RRTKR. Residue Ser44 coordinates NADP(+). Residues 172–173 and Arg215 each bind FMN; that span reads GL.

This sequence belongs to the nitroreductase family. Requires FMN as cofactor.

The catalysed reaction is N-phenylhydroxylamine + 2 NADP(+) + H2O = nitrobenzene + 2 NADPH + 2 H(+). The protein operates within xenobiotic degradation; nitrobenzene degradation. It functions in the pathway xenobiotic degradation; 4-chloronitrobenzene degradation. Functionally, involved in the biodegradation of chlorinated nitroaromatic compounds. Catalyzes the reduction of 4-chloronitrobenzene to yield 1-hydroxylamino-4-chlorobenzene. Probably also able to catalyze the two-electron reduction of nitrobenzene (NB) to produce a nitrosobenzene (NOB) intermediate, which is immediately reduced to hydroxylaminobenzene (HAB) by a second two-electron transfer. The sequence is that of Chloronitrobenzene nitroreductase from Comamonas testosteroni (Pseudomonas testosteroni).